We begin with the raw amino-acid sequence, 181 residues long: Malignant T-cell-amplified sequence 1 (181 aa).

The residue at position 81 (T81) is a Phosphothreonine; by MAPK1 and MAPK3. Positions 92-171 (LPHQQVDKGA…IGIENIHYLN (80 aa)) constitute a PUA domain. Residue S118 is modified to Phosphoserine; by CDK1.

It belongs to the MCTS1 family. As to quaternary structure, interacts (via PUA domain) with DENR; the complex regulates translation reinitiation. Post-translationally, phosphorylation is critical for stabilization and promotion of cell proliferation. Ubiquitous. Over-expressed in T-cell lymphoid cell lines and in non-Hodgkin lymphoma cell lines as well as in a subset of primary large B-cell lymphomas.

Its subcellular location is the cytoplasm. In terms of biological role, translation regulator forming a complex with DENR to promote translation reinitiation. Translation reinitiation is the process where the small ribosomal subunit remains attached to the mRNA following termination of translation of a regulatory upstream ORF (uORF), and resume scanning on the same mRNA molecule to initiate translation of a downstream ORF, usually the main ORF (mORF). The MCTS1/DENR complex is pivotal to two linked mechanisms essential for translation reinitiation. Firstly, the dissociation of deacylated tRNAs from post-termination 40S ribosomal complexes during ribosome recycling. Secondly, the recruitment in an EIF2-independent manner of aminoacylated initiator tRNA to P site of 40S ribosomes for a new round of translation. This regulatory mechanism governs the translation of more than 150 genes which translation reinitiation is MCTS1/DENR complex-dependent. Consequently, modulates various unrelated biological processes including cell cycle regulation and DNA damage signaling and repair. Notably, it positively regulates interferon gamma immunity to mycobacteria by enhancing the translation of JAK2. The sequence is that of Malignant T-cell-amplified sequence 1 (MCTS1) from Homo sapiens (Human).